Here is a 1306-residue protein sequence, read N- to C-terminus: Contactin-associated protein-like 5 (1306 aa).

A signal peptide spans 1–24; the sequence is MDSLPRLTSVLTLLFSGLWHLGLT. Residues 25 to 1237 are Extracellular-facing; it reads ATNYNCDDPL…PLTNAVRSDS (1213 aa). The 145-residue stretch at 30–174 folds into the F5/8 type C domain; the sequence is CDDPLASLLS…IGMRVEVYGC (145 aa). The cysteines at positions 30 and 174 are disulfide-linked. Laminin G-like domains lie at 180–360 and 367–544; these read VADF…TFSC and PITF…IDLC. N-linked (GlcNAc...) asparagine glycans are attached at residues Asn282, Asn355, and Asn496. A disulfide bridge connects residues Cys329 and Cys360. 3 disulfide bridges follow: Cys512–Cys544, Cys550–Cys561, and Cys555–Cys570. The EGF-like 1 domain occupies 546 to 583; it reads IKDRCLPNYCEHGGSCSQSWTTFYCNCSDTSYTGATCH. An N-linked (GlcNAc...) asparagine glycan is attached at Asn571. A disulfide bond links Cys572 and Cys582. One can recognise a Fibrinogen C-terminal domain in the interval 584–790; that stretch reads NSIYEQSCEV…LRCYGDRRFW (207 aa). Residue Asn622 is glycosylated (N-linked (GlcNAc...) asparagine). One can recognise a Laminin G-like 3 domain in the interval 791 to 956; sequence NAVSFYTEAS…KVTSGVRPGC (166 aa). Cystine bridges form between Cys929-Cys956, Cys960-Cys973, Cys967-Cys982, Cys984-Cys994, and Cys1164-Cys1199. The region spanning 957-995 is the EGF-like 2 domain; it reads PGHCSSYGSICHNGGKCVEKHNGYLCDCTNSPYEGPFCK. The 187-residue stretch at 1013-1199 folds into the Laminin G-like 4 domain; it reads QEPYPVTKNI…VHGTLTESSC (187 aa). The helical transmembrane segment at 1238–1258 threads the bilayer; sequence AVIGGVIAVVIFIIFCIIGIM. The Cytoplasmic portion of the chain corresponds to 1259–1306; the sequence is TRFLYQHKQSHRTSQMKEKEYPENLDSSFRNEIDLQNTVSECKREYFI.

The protein belongs to the neurexin family.

It localises to the membrane. Functionally, may play a role in the correct development and proper functioning of the peripheral and central nervous system and be involved in cell adhesion and intercellular communication. This chain is Contactin-associated protein-like 5 (CNTNAP5), found in Homo sapiens (Human).